A 403-amino-acid chain; its full sequence is CCA-adding enzyme (403 aa).

2 residues coordinate ATP: glycine 32 and arginine 35. Glycine 32 and arginine 35 together coordinate CTP. Mg(2+)-binding residues include aspartate 45 and aspartate 47. Residues arginine 116, aspartate 159, arginine 162, arginine 165, and arginine 168 each contribute to the ATP site. 5 residues coordinate CTP: arginine 116, aspartate 159, arginine 162, arginine 165, and arginine 168.

Belongs to the tRNA nucleotidyltransferase/poly(A) polymerase family. Bacterial CCA-adding enzyme type 3 subfamily. Homodimer. Requires Mg(2+) as cofactor.

The enzyme catalyses a tRNA precursor + 2 CTP + ATP = a tRNA with a 3' CCA end + 3 diphosphate. It catalyses the reaction a tRNA with a 3' CCA end + 2 CTP + ATP = a tRNA with a 3' CCACCA end + 3 diphosphate. Catalyzes the addition and repair of the essential 3'-terminal CCA sequence in tRNAs without using a nucleic acid template. Adds these three nucleotides in the order of C, C, and A to the tRNA nucleotide-73, using CTP and ATP as substrates and producing inorganic pyrophosphate. tRNA 3'-terminal CCA addition is required both for tRNA processing and repair. Also involved in tRNA surveillance by mediating tandem CCA addition to generate a CCACCA at the 3' terminus of unstable tRNAs. While stable tRNAs receive only 3'-terminal CCA, unstable tRNAs are marked with CCACCA and rapidly degraded. The sequence is that of CCA-adding enzyme from Streptococcus suis (strain 98HAH33).